The sequence spans 660 residues: Bifunctional polymyxin resistance protein ArnA (660 aa).

Positions 1-304 are formyltransferase ArnAFT; sequence MKTVVFAYHD…MLGLVQGSRL (304 aa). A (6R)-10-formyltetrahydrofolate-binding site is contributed by 86–88; the sequence is HLI. The active-site Proton donor; for formyltransferase activity is histidine 104. (6R)-10-formyltetrahydrofolate is bound by residues arginine 114 and 136-140; that span reads VKRAD. The segment at 314 to 660 is dehydrogenase ArnADH; it reads RRTRVLILGV…RTVDLTDKPS (347 aa). NAD(+) is bound by residues aspartate 347 and 368–369; that span reads DI. Residues alanine 393, tyrosine 398, and 432 to 433 contribute to the UDP-alpha-D-glucuronate site; that span reads TS. Glutamate 434 functions as the Proton acceptor; for decarboxylase activity in the catalytic mechanism. Residues arginine 460, asparagine 492, 526–535, and tyrosine 613 contribute to the UDP-alpha-D-glucuronate site; that span reads KLIDGGKQKR. Residue arginine 619 is the Proton donor; for decarboxylase activity of the active site.

This sequence in the N-terminal section; belongs to the Fmt family. UDP-L-Ara4N formyltransferase subfamily. It in the C-terminal section; belongs to the NAD(P)-dependent epimerase/dehydratase family. UDP-glucuronic acid decarboxylase subfamily. In terms of assembly, homohexamer, formed by a dimer of trimers.

The catalysed reaction is UDP-alpha-D-glucuronate + NAD(+) = UDP-beta-L-threo-pentopyranos-4-ulose + CO2 + NADH. It carries out the reaction UDP-4-amino-4-deoxy-beta-L-arabinose + (6R)-10-formyltetrahydrofolate = UDP-4-deoxy-4-formamido-beta-L-arabinose + (6S)-5,6,7,8-tetrahydrofolate + H(+). Its pathway is nucleotide-sugar biosynthesis; UDP-4-deoxy-4-formamido-beta-L-arabinose biosynthesis; UDP-4-deoxy-4-formamido-beta-L-arabinose from UDP-alpha-D-glucuronate: step 1/3. It participates in nucleotide-sugar biosynthesis; UDP-4-deoxy-4-formamido-beta-L-arabinose biosynthesis; UDP-4-deoxy-4-formamido-beta-L-arabinose from UDP-alpha-D-glucuronate: step 3/3. It functions in the pathway bacterial outer membrane biogenesis; lipopolysaccharide biosynthesis. Its function is as follows. Bifunctional enzyme that catalyzes the oxidative decarboxylation of UDP-glucuronic acid (UDP-GlcUA) to UDP-4-keto-arabinose (UDP-Ara4O) and the addition of a formyl group to UDP-4-amino-4-deoxy-L-arabinose (UDP-L-Ara4N) to form UDP-L-4-formamido-arabinose (UDP-L-Ara4FN). The modified arabinose is attached to lipid A and is required for resistance to polymyxin and cationic antimicrobial peptides. The chain is Bifunctional polymyxin resistance protein ArnA from Shigella flexneri.